A 530-amino-acid polypeptide reads, in one-letter code: Vesicular acetylcholine transporter (530 aa).

Residues 1–33 (MEPTAPTGQARAAATKLSEAVGAALQEPQRQRR) lie on the Cytoplasmic side of the membrane. The helical transmembrane segment at 34–54 (LVLVIVCVALLLDNMLYMVIV) threads the bilayer. Residues 55–125 (PIVPDYIAHM…PTESEDVKIG (71 aa)) lie on the Lumenal, vesicle side of the membrane. Residues Asn89 and Asn96 are each glycosylated (N-linked (GlcNAc...) asparagine). Residues 126 to 146 (VLFASKAILQLLVNPLSGPFI) traverse the membrane as a helical segment. At 147-152 (DRMSYD) the chain is on the cytoplasmic side. A helical membrane pass occupies residues 153–173 (VPLLIGLGVMFASTVMFAFAE). The Lumenal, vesicle portion of the chain corresponds to 174-182 (DYATLFAAR). A helical membrane pass occupies residues 183–203 (SLQGLGSAFADTSGIAMIADK). At 204–213 (YPEEPERSRA) the chain is on the cytoplasmic side. A helical membrane pass occupies residues 214–234 (LGVALAFISFGSLVAPPFGGI). Residues 235-242 (LYEFAGKR) lie on the Lumenal, vesicle side of the membrane. A helical transmembrane segment spans residues 243-263 (VPFLVLAAVSLFDALLLLAVA). The Cytoplasmic segment spans residues 264 to 289 (KPFSAAARARANLPVGTPIHRLMLDP). The chain crosses the membrane as a helical span at residues 290-310 (YIAVVAGALTTCNIPLAFLEP). The Lumenal, vesicle segment spans residues 311–325 (TIATWMKHTMAASEW). Residues 326–346 (EMGMVWLPAFVPHVLGVYLTV) traverse the membrane as a helical segment. The Cytoplasmic segment spans residues 347–356 (RLAARYPHLQ). The helical transmembrane segment at 357–377 (WLYGALGLAVIGVSSCVVPAC) threads the bilayer. Over 378 to 388 (RSFAPLVVSLC) the chain is Lumenal, vesicle. A helical membrane pass occupies residues 389 to 409 (GLCFGIALVDTALLPTLAFLV). Over 410–422 (DVRHVSVYGSVYA) the chain is Cytoplasmic. The chain crosses the membrane as a helical span at residues 423–443 (IADISYSVAYALGPIVAGHIV). Residues 444–447 (HSLG) are Lumenal, vesicle-facing. Residues 448–468 (FEQLSLGMGLANLLYAPVLLL) form a helical membrane-spanning segment. At 469–530 (LRNVGLLTRS…EDDYNYYSRS (62 aa)) the chain is on the cytoplasmic side. Residues 471–530 (NVGLLTRSRSERDVLLDEPPQGLYDAVRLREVQGKDGGEPCSPPGPFDGCEDDYNYYSRS) form a mediates interaction with SEC14L1 region. The interval 504-530 (GKDGGEPCSPPGPFDGCEDDYNYYSRS) is disordered.

This sequence belongs to the major facilitator superfamily. Vesicular transporter family. Interacts with SEC14L1. As to expression, high expression in all major cholinergic cell groups, including peripheral postganglionic parasympathetic cells, preganglionic sympathetic and parasympathetic cells, ventral spinal cord and brainstem motoneurons, cell groups in the basal forebrain, the habenula and the corpus striatum. Weakly expressed in the cortex and hippocampus.

The protein localises to the cytoplasmic vesicle. It localises to the secretory vesicle. Its subcellular location is the synaptic vesicle membrane. It catalyses the reaction acetylcholine(out) + 2 H(+)(in) = acetylcholine(in) + 2 H(+)(out). It carries out the reaction choline(in) + 2 H(+)(out) = choline(out) + 2 H(+)(in). The catalysed reaction is serotonin(in) + 2 H(+)(out) = serotonin(out) + 2 H(+)(in). Potently inhibited by L-vesamicol. Electrogenic antiporter that exchanges one cholinergic neurotransmitter, acetylcholine or choline, with two intravesicular protons across the membrane of synaptic vesicles. Uses the electrochemical proton gradient established by the V-type proton-pump ATPase to store neurotransmitters inside the vesicles prior to their release via exocytosis. Determines cholinergic vesicular quantal size at presynaptic nerve terminals in developing neuro-muscular junctions with an impact on motor neuron differentiation and innervation pattern. Part of forebrain cholinergic system, regulates hippocampal synapse transmissions that underlie spatial memory formation. Can transport serotonin. The sequence is that of Vesicular acetylcholine transporter (Slc18a3) from Rattus norvegicus (Rat).